The sequence spans 148 residues: ASCH domain-containing ribonuclease (148 aa).

Positions 13–70 (SLWPEFAKAIVSGKKTVEFRRRIPLPALSARIWIYATRPVKSVIGFAYLEAIVQGDVN) constitute an ASCH domain.

Mn(2+) serves as cofactor. Ni(2+) is required as a cofactor.

Shows sequence-specific endoribonuclease activity towards single-stranded RNA (ssRNA), with a preference for the bond between pyrimidine and adenine nucleotides. May also have 5'-exonuclease activity. This is ASCH domain-containing ribonuclease from Zymomonas mobilis subsp. mobilis (strain ATCC 10988 / DSM 424 / LMG 404 / NCIMB 8938 / NRRL B-806 / ZM1).